Consider the following 454-residue polypeptide: Uridine kinase (454 aa).

28 to 35 provides a ligand contact to ATP; the sequence is GPSGSGKT.

The protein belongs to the uridine kinase family.

Its subcellular location is the cytoplasm. The protein resides in the nucleus. The enzyme catalyses uridine + ATP = UMP + ADP + H(+). The catalysed reaction is cytidine + ATP = CMP + ADP + H(+). The protein operates within pyrimidine metabolism; CTP biosynthesis via salvage pathway; CTP from cytidine: step 1/3. It functions in the pathway pyrimidine metabolism; UMP biosynthesis via salvage pathway; UMP from uridine: step 1/1. In terms of biological role, catalyzes the conversion of uridine into UMP and cytidine into CMP in the pyrimidine salvage pathway. The polypeptide is Uridine kinase (urk1) (Schizosaccharomyces pombe (strain 972 / ATCC 24843) (Fission yeast)).